The primary structure comprises 400 residues: Argininosuccinate synthase (400 aa).

Residues 6-14 (AYSGGLDTS) and Ala33 each bind ATP. Residues Tyr84 and Ser89 each contribute to the L-citrulline site. Position 114 (Gly114) interacts with ATP. 3 residues coordinate L-aspartate: Thr116, Asn120, and Asp121. Residue Asn120 coordinates L-citrulline. Positions 124, 173, 182, 258, and 270 each coordinate L-citrulline.

The protein belongs to the argininosuccinate synthase family. Type 1 subfamily. In terms of assembly, homotetramer.

The protein resides in the cytoplasm. The catalysed reaction is L-citrulline + L-aspartate + ATP = 2-(N(omega)-L-arginino)succinate + AMP + diphosphate + H(+). Its pathway is amino-acid biosynthesis; L-arginine biosynthesis; L-arginine from L-ornithine and carbamoyl phosphate: step 2/3. This is Argininosuccinate synthase from Thermus thermophilus (strain ATCC BAA-163 / DSM 7039 / HB27).